We begin with the raw amino-acid sequence, 354 residues long: MTLLKNDTFLRALLKQPVEYTPIWMMRQAGRYLPEYKATRAKAGSFLDLCKNTELATEVTIQPLERFDLDAAILFSDILTVPDAMGLGLYFAEGEGPKFKRALQHEDDIAKLHVPDMEKLQYVFDAVTSIRKALDGRVPLIGFSGSPFTLACYMVEGGSSKEFRTIKTMMYSRPDLLHKILDTNAQAVTAYLNAQIDAGAQAVQIFDTWGGVLSDAAFKEFSLKYIRQIVAGLKRESEGRRVPVIVFAKGGGLWLESMAEIGADALGLDWTCNIGEARRRVGKQVALQGNFDPFALFGTPESIRTEVARILADYGHGSGHVFNLGHGINQHADPEHAKILVDTVHELSRQYHGG.

Substrate contacts are provided by residues 27–31 (RQAGR), Asp-77, Tyr-153, Thr-208, and His-326.

It belongs to the uroporphyrinogen decarboxylase family. In terms of assembly, homodimer.

Its subcellular location is the cytoplasm. It catalyses the reaction uroporphyrinogen III + 4 H(+) = coproporphyrinogen III + 4 CO2. It participates in porphyrin-containing compound metabolism; protoporphyrin-IX biosynthesis; coproporphyrinogen-III from 5-aminolevulinate: step 4/4. Its function is as follows. Catalyzes the decarboxylation of four acetate groups of uroporphyrinogen-III to yield coproporphyrinogen-III. In Neisseria meningitidis serogroup C (strain 053442), this protein is Uroporphyrinogen decarboxylase.